The chain runs to 306 residues: Bifunctional protein FolD (306 aa).

Residues 166 to 168 (GRS) and I232 each bind NADP(+).

This sequence belongs to the tetrahydrofolate dehydrogenase/cyclohydrolase family. Homodimer.

It carries out the reaction (6R)-5,10-methylene-5,6,7,8-tetrahydrofolate + NADP(+) = (6R)-5,10-methenyltetrahydrofolate + NADPH. The catalysed reaction is (6R)-5,10-methenyltetrahydrofolate + H2O = (6R)-10-formyltetrahydrofolate + H(+). It participates in one-carbon metabolism; tetrahydrofolate interconversion. Its function is as follows. Catalyzes the oxidation of 5,10-methylenetetrahydrofolate to 5,10-methenyltetrahydrofolate and then the hydrolysis of 5,10-methenyltetrahydrofolate to 10-formyltetrahydrofolate. This is Bifunctional protein FolD from Methylorubrum extorquens (strain CM4 / NCIMB 13688) (Methylobacterium extorquens).